Reading from the N-terminus, the 156-residue chain is SsrA-binding protein (156 aa).

Positions 134–156 (YDKRETLKRKEQDREMARALRKR) are disordered.

It belongs to the SmpB family.

The protein localises to the cytoplasm. Its function is as follows. Required for rescue of stalled ribosomes mediated by trans-translation. Binds to transfer-messenger RNA (tmRNA), required for stable association of tmRNA with ribosomes. tmRNA and SmpB together mimic tRNA shape, replacing the anticodon stem-loop with SmpB. tmRNA is encoded by the ssrA gene; the 2 termini fold to resemble tRNA(Ala) and it encodes a 'tag peptide', a short internal open reading frame. During trans-translation Ala-aminoacylated tmRNA acts like a tRNA, entering the A-site of stalled ribosomes, displacing the stalled mRNA. The ribosome then switches to translate the ORF on the tmRNA; the nascent peptide is terminated with the 'tag peptide' encoded by the tmRNA and targeted for degradation. The ribosome is freed to recommence translation, which seems to be the essential function of trans-translation. This Latilactobacillus sakei subsp. sakei (strain 23K) (Lactobacillus sakei subsp. sakei) protein is SsrA-binding protein.